The chain runs to 224 residues: Mammalian ependymin-related protein 1 (224 aa).

Residues 1-37 (MPGRAPLHTVPGALGPWLLGCLWAWTLCGLCSLGAVG) form the signal peptide. Cystine bridges form between Cys-42/Cys-172, Cys-88/Cys-222, and Cys-113/Cys-210. Residues Asn-130 and Asn-182 are each glycosylated (N-linked (GlcNAc...) asparagine).

This sequence belongs to the ependymin family. In terms of assembly, homodimer. Post-translationally, N-glycosylated; the glycan contains mannose-6-phosphate moieties.

Its subcellular location is the lysosome lumen. It localises to the secreted. In terms of biological role, binds anionic lipids and gangliosides at acidic pH. This Macaca fascicularis (Crab-eating macaque) protein is Mammalian ependymin-related protein 1 (EPDR1).